We begin with the raw amino-acid sequence, 439 residues long: Xylose isomerase (439 aa).

Active-site residues include H98 and D101. E229, E265, H268, D293, D304, D306, and D335 together coordinate Mg(2+).

This sequence belongs to the xylose isomerase family. In terms of assembly, homotetramer. It depends on Mg(2+) as a cofactor.

It is found in the cytoplasm. It carries out the reaction alpha-D-xylose = alpha-D-xylulofuranose. Involved in D-xylose catabolism. The chain is Xylose isomerase (xylA) from Staphylococcus xylosus.